The primary structure comprises 359 residues: Type-1 angiotensin II receptor (359 aa).

The Extracellular portion of the chain corresponds to 1 to 25 (MILNSSTEDSIKRIQDDCPKAGRHN). Asparagine 4 carries N-linked (GlcNAc...) asparagine glycosylation. Positions 15 and 17 each coordinate angiotensin II. 2 cysteine pairs are disulfide-bonded: cysteine 18/cysteine 274 and cysteine 101/cysteine 180. Residues 26 to 55 (YIFVMIPTLYSIIFVVGIFGNSLVVIVIYF) traverse the membrane as a helical segment. The Cytoplasmic segment spans residues 56–61 (YMKLKT). A helical membrane pass occupies residues 62–89 (VASVFLLNLALADLCFLLTLPLWAVYTA). Topologically, residues 90–98 (MEYRWPFGN) are extracellular. A helical membrane pass occupies residues 99–125 (YLCKIASASVSFNLYASVFLLTCLSID). Residues 126–141 (RYLAIVHPMKSRLRRT) are Cytoplasmic-facing. A helical transmembrane segment spans residues 142 to 165 (MLVAKVTCIIIWLLAGLASLPTII). Topologically, residues 166-190 (HRNVFFIENTNITVCAFHYESQNST) are extracellular. Residue arginine 167 participates in angiotensin II binding. Asparagine 176 is a glycosylation site (N-linked (GlcNAc...) asparagine). Residues phenylalanine 182, histidine 183, and tyrosine 184 each coordinate angiotensin II. Asparagine 188 carries an N-linked (GlcNAc...) asparagine glycan. The chain crosses the membrane as a helical span at residues 191–216 (LPVGLGLTKNILGFLFPFLIILTSYT). Residue lysine 199 participates in angiotensin II binding. Residues 217 to 239 (LIWKALKKAYEIQKNKPRNDDIF) are Cytoplasmic-facing. Residues 240-268 (KIIMAIVLFFFFSWVPHQIFTFLDVLIQL) form a helical membrane-spanning segment. Topologically, residues 269 to 278 (GIIHDCKIAD) are extracellular. Residues 279–304 (IVDTAMPITICLAYFNNCLNPLFYGF) traverse the membrane as a helical segment. The Cytoplasmic segment spans residues 305–359 (LGKKFKKYFLQLLKYIPPKAKSHSSLSTKMSTLSYRPSENGSSSTKKSAPCTEVE). The disordered stretch occupies residues 326-359 (SHSSLSTKMSTLSYRPSENGSSSTKKSAPCTEVE). Positions 327-351 (HSSLSTKMSTLSYRPSENGSSSTKK) are enriched in polar residues. Cysteine 355 carries S-palmitoyl cysteine lipidation.

This sequence belongs to the G-protein coupled receptor 1 family. In terms of assembly, interacts with MAS1. Interacts with ARRB1. Interacts with FLNA (via filamin repeat 21); increases PKA-mediated phosphorylation of FLNA. C-terminal Ser or Thr residues may be phosphorylated.

Its subcellular location is the cell membrane. Its function is as follows. Receptor for angiotensin II, a vasoconstricting peptide, which acts as a key regulator of blood pressure and sodium retention by the kidney. The activated receptor in turn couples to G-alpha proteins G(q) (GNAQ, GNA11, GNA14 or GNA15) and thus activates phospholipase C and increases the cytosolic Ca(2+) concentrations, which in turn triggers cellular responses such as stimulation of protein kinase C. The polypeptide is Type-1 angiotensin II receptor (AGTR1) (Sus scrofa (Pig)).